The following is a 572-amino-acid chain: Linalool synthase TPS2, chloroplastic (572 aa).

Residues 1-27 (EVEEPKTKISASTAEASSSRISSAKMT) constitute a chloroplast transit peptide. The disordered stretch occupies residues 1–45 (EVEEPKTKISASTAEASSSRISSAKMTADGTIKLGDQSPLKQSEK). The span at 8–28 (KISASTAEASSSRISSAKMTA) shows a compositional bias: low complexity. (2E)-geranyl diphosphate-binding residues include Arg284, Asp321, Asp325, Arg462, and Asn465. Mg(2+) is bound by residues Asp321 and Asp325. Residues 321–325 (DDVYD) carry the DDXXD motif motif. Mg(2+) contacts are provided by Asn465, Thr469, and Ser473.

The protein belongs to the terpene synthase family. Tpsb subfamily. As to quaternary structure, monomer. Mg(2+) serves as cofactor. It depends on Mn(2+) as a cofactor. Expressed in flowers and fruits.

The protein resides in the plastid. It localises to the chloroplast. It catalyses the reaction (2E)-geranyl diphosphate = beta-myrcene + diphosphate. The enzyme catalyses (2E)-geranyl diphosphate + H2O = linalool + diphosphate. It carries out the reaction (2E)-geranyl diphosphate = (Z)-beta-ocimene + diphosphate. The catalysed reaction is (2E)-geranyl diphosphate = (E)-beta-ocimene + diphosphate. Its pathway is secondary metabolite biosynthesis; terpenoid biosynthesis. Functionally, monoterpene synthase (mono-TPS) involved in the biosynthesis of monoterpenes natural products, constituent of coffee beverage aroma. Catalyzes the conversion of (2E)-geranyl diphosphate (GPP) into linalool and beta-myrcene, and, as minor products, cis-ocimene and trans-ocimene. Not able to use geranylgeranyl pyrophosphate (GGPP) and farnesyl pyrophosphate (FPP) as substrates. The sequence is that of Linalool synthase TPS2, chloroplastic from Coffea arabica (Arabian coffee).